Consider the following 343-residue polypeptide: Probable dual-specificity RNA methyltransferase RlmN (343 aa).

Glutamate 93 serves as the catalytic Proton acceptor. Positions 99-320 (TDDRATLCVS…NAKGVVCTIR (222 aa)) constitute a Radical SAM core domain. Cysteine 106 and cysteine 331 are joined by a disulfide. Positions 113, 117, and 120 each coordinate [4Fe-4S] cluster. S-adenosyl-L-methionine-binding positions include 158 to 159 (GE), serine 190, 212 to 214 (SLH), and histidine 288. The active-site S-methylcysteine intermediate is cysteine 331.

The protein belongs to the radical SAM superfamily. RlmN family. [4Fe-4S] cluster is required as a cofactor.

It localises to the cytoplasm. It carries out the reaction adenosine(2503) in 23S rRNA + 2 reduced [2Fe-2S]-[ferredoxin] + 2 S-adenosyl-L-methionine = 2-methyladenosine(2503) in 23S rRNA + 5'-deoxyadenosine + L-methionine + 2 oxidized [2Fe-2S]-[ferredoxin] + S-adenosyl-L-homocysteine. It catalyses the reaction adenosine(37) in tRNA + 2 reduced [2Fe-2S]-[ferredoxin] + 2 S-adenosyl-L-methionine = 2-methyladenosine(37) in tRNA + 5'-deoxyadenosine + L-methionine + 2 oxidized [2Fe-2S]-[ferredoxin] + S-adenosyl-L-homocysteine. In terms of biological role, specifically methylates position 2 of adenine 2503 in 23S rRNA and position 2 of adenine 37 in tRNAs. The sequence is that of Probable dual-specificity RNA methyltransferase RlmN from Parabacteroides distasonis (strain ATCC 8503 / DSM 20701 / CIP 104284 / JCM 5825 / NCTC 11152).